The sequence spans 252 residues: Thiazole synthase (252 aa).

The Schiff-base intermediate with DXP role is filled by lysine 91. 1-deoxy-D-xylulose 5-phosphate contacts are provided by residues glycine 152, alanine 179–glycine 180, and asparagine 201–threonine 202.

It belongs to the ThiG family. In terms of assembly, homotetramer. Forms heterodimers with either ThiH or ThiS.

The protein resides in the cytoplasm. It carries out the reaction [ThiS sulfur-carrier protein]-C-terminal-Gly-aminoethanethioate + 2-iminoacetate + 1-deoxy-D-xylulose 5-phosphate = [ThiS sulfur-carrier protein]-C-terminal Gly-Gly + 2-[(2R,5Z)-2-carboxy-4-methylthiazol-5(2H)-ylidene]ethyl phosphate + 2 H2O + H(+). It participates in cofactor biosynthesis; thiamine diphosphate biosynthesis. In terms of biological role, catalyzes the rearrangement of 1-deoxy-D-xylulose 5-phosphate (DXP) to produce the thiazole phosphate moiety of thiamine. Sulfur is provided by the thiocarboxylate moiety of the carrier protein ThiS. In vitro, sulfur can be provided by H(2)S. This Gluconobacter oxydans (strain 621H) (Gluconobacter suboxydans) protein is Thiazole synthase.